The chain runs to 420 residues: Membrane protein UL43 homolog (420 aa).

11 helical membrane passes run 58-78, 81-101, 114-134, 157-177, 181-201, 203-223, 278-298, 312-332, 343-363, 364-384, and 399-419; these read IFSI…IQFI, KIIY…AFIV, IGKP…TLIT, LMCF…CLAT, LTWK…ISAP, GNIS…INVV, QIPM…VIAL, TDML…IFIP, IIIL…FGLV, LGPT…CINI, and VVKS…LVAL.

The protein belongs to the alphaherpesvirinae HHV-1 UL43 family.

The protein resides in the host membrane. This is Membrane protein UL43 homolog (MDV056) from Gallus gallus (Chicken).